A 295-amino-acid chain; its full sequence is Protein PHR1-LIKE 2 (295 aa).

Positions 38-98 (TDPKPRLRWT…HLQKFRLGRQ (61 aa)) constitute an HTH myb-type domain. A DNA-binding region (H-T-H motif) is located at residues 69 to 94 (PKTIMRTMGVKGLTLYHLKSHLQKFR). Residues 96-138 (GRQAGKESTENSKDASCVGESQDTGSSSTSSMRMAQQEQNEGY) are disordered. A compositionally biased stretch (basic and acidic residues) spans 99–108 (AGKESTENSK). Positions 127–138 (MRMAQQEQNEGY) are enriched in polar residues. A coiled-coil region spans residues 141-161 (TEALRAQMEVQRRLHDQLEVQ). An LHEQLE motif is present at residues 154 to 159 (LHDQLE).

It belongs to the MYB-CC family. In terms of assembly, homo- and heterodimers. Interacts with PHL3, but not with PHR1.

Its subcellular location is the nucleus. Functionally, transcriptional activator. Acts redundantly with PHR1 as a key component of the central regulatory system controlling transcriptional responses to Pi starvation. Binds in a sequence-specific manner to phosphate starvation-regulated promoters. The chain is Protein PHR1-LIKE 2 from Arabidopsis thaliana (Mouse-ear cress).